The sequence spans 358 residues: B3 domain-containing protein Os12g0592300 (358 aa).

Residues 25–122 constitute a DNA-binding region (TF-B3 1); sequence RIRFFRLMTG…SFDVLIFDAS (98 aa). A disordered region spans residues 148-215; it reads YHLSDSEDTS…EKSDDDDEHA (68 aa). Over residues 156–181 the composition is skewed to polar residues; sequence TSTPSTFLVGSPHKASTSKKLNGKTK. A compositionally biased stretch (acidic residues) spans 203 to 215; that stretch reads IEEEKSDDDDEHA. Positions 252-350 form a DNA-binding region, TF-B3 2; that stretch reads FVTVLQAPQI…TMTVHVIGKV (99 aa).

The protein localises to the nucleus. The sequence is that of B3 domain-containing protein Os12g0592300 from Oryza sativa subsp. japonica (Rice).